Here is a 289-residue protein sequence, read N- to C-terminus: ATP synthase gamma chain (289 aa).

The protein belongs to the ATPase gamma chain family. In terms of assembly, F-type ATPases have 2 components, CF(1) - the catalytic core - and CF(0) - the membrane proton channel. CF(1) has five subunits: alpha(3), beta(3), gamma(1), delta(1), epsilon(1). CF(0) has three main subunits: a, b and c.

The protein resides in the cell inner membrane. In terms of biological role, produces ATP from ADP in the presence of a proton gradient across the membrane. The gamma chain is believed to be important in regulating ATPase activity and the flow of protons through the CF(0) complex. The chain is ATP synthase gamma chain from Histophilus somni (strain 129Pt) (Haemophilus somnus).